The sequence spans 161 residues: Cytochrome c-type biogenesis protein CcmE (161 aa).

At Met1 to Arg8 the chain is on the cytoplasmic side. A helical; Signal-anchor for type II membrane protein membrane pass occupies residues Leu9–Ala29. At Leu30–Tyr161 the chain is on the periplasmic side. His131 and Tyr135 together coordinate heme.

This sequence belongs to the CcmE/CycJ family.

The protein localises to the cell inner membrane. In terms of biological role, heme chaperone required for the biogenesis of c-type cytochromes. Transiently binds heme delivered by CcmC and transfers the heme to apo-cytochromes in a process facilitated by CcmF and CcmH. In Shewanella sediminis (strain HAW-EB3), this protein is Cytochrome c-type biogenesis protein CcmE.